Consider the following 509-residue polypeptide: Cytochrome P450 monooxygenase FUP2 (509 aa).

The next 2 membrane-spanning stretches (helical) occupy residues 16-36 (FGLA…YGCF) and 224-244 (MVEA…FGIA). C450 provides a ligand contact to heme.

It belongs to the cytochrome P450 family. Heme is required as a cofactor.

It localises to the membrane. It participates in secondary metabolite biosynthesis. In terms of biological role, cytochrome P450 monooxygenase; part of the gene cluster that mediates the biosynthesis of the mycotoxin fusaproliferin (FUP) that belongs to the class of bicyclic sesterterpenoids. FUP2 introduces a hydroxyl group at the C-24 position resulting in the formation of preterpestacin IIa, which can be further oxidized. The oxidation of the hydroxyl group at C-24 to an aldehyde and further to a carboxylic group takes place via unspecific alcohol and aldehyde dehydrogenases and leads to the shunt products preterpestacin IIc and preterpestacin IIb, respectively. The FUP biosynthetic pathway starts with the enzyme encoded by FUP1 that combines a C-terminal prenyltransferase domain responsible for the synthesis of geranylgeranyl diphosphate with the N-terminal terpene cyclase domain, to yield preterpestacin I. Preterpestacin I is then decorated by oxygenation steps that are catalyzed by two cytochrome P450 monooxygenases. First, FUP2 introduces a hydroxyl group at the C-24 position resulting in the formation of preterpestacin IIa. The second P450 monooxygenase catalyzes the hydroxylation at C-16 and C-17 of preterpestacin IIa, producing preterpestacin III. Subsequently, the FAD-dependent oxidoreductase FUP4 catalyzes the oxidation of the hydroxy group at the C-16 position to a keto group, leading to the formation of (-)-terpestacin, which is the immediate precursor of FUP. The final step in the proposed biosynthetic pathway is the addition of an acetyl group at the C-24 position of terpestacin, which is catalyzed by the acetyltransferase FUP5. The protein is Cytochrome P450 monooxygenase FUP2 of Fusarium proliferatum (strain ET1) (Orchid endophyte fungus).